The following is a 494-amino-acid chain: Aspartyl/glutamyl-tRNA(Asn/Gln) amidotransferase subunit B (494 aa).

The protein belongs to the GatB/GatE family. GatB subfamily. Heterotrimer of A, B and C subunits.

It catalyses the reaction L-glutamyl-tRNA(Gln) + L-glutamine + ATP + H2O = L-glutaminyl-tRNA(Gln) + L-glutamate + ADP + phosphate + H(+). It carries out the reaction L-aspartyl-tRNA(Asn) + L-glutamine + ATP + H2O = L-asparaginyl-tRNA(Asn) + L-glutamate + ADP + phosphate + 2 H(+). Allows the formation of correctly charged Asn-tRNA(Asn) or Gln-tRNA(Gln) through the transamidation of misacylated Asp-tRNA(Asn) or Glu-tRNA(Gln) in organisms which lack either or both of asparaginyl-tRNA or glutaminyl-tRNA synthetases. The reaction takes place in the presence of glutamine and ATP through an activated phospho-Asp-tRNA(Asn) or phospho-Glu-tRNA(Gln). In Rhizorhabdus wittichii (strain DSM 6014 / CCUG 31198 / JCM 15750 / NBRC 105917 / EY 4224 / RW1) (Sphingomonas wittichii), this protein is Aspartyl/glutamyl-tRNA(Asn/Gln) amidotransferase subunit B.